Consider the following 78-residue polypeptide: Kunitz-type serine protease inhibitor conotoxin Cal9.1a (78 aa).

The N-terminal stretch at 1–16 (MTFLLLLVSVCMMATG) is a signal peptide. Residues 17-20 (EERT) constitute a propeptide that is removed on maturation. Residues 25 to 75 (CELPFEEGPCFAAIRVYAYNAETGDCEQLTYGGCEGNGNRFATLEDCDNAC) form the BPTI/Kunitz inhibitor domain. Disulfide bonds link Cys-25/Cys-75, Cys-34/Cys-58, and Cys-50/Cys-71.

It belongs to the venom Kunitz-type family. In terms of tissue distribution, expressed by the venom duct.

Its subcellular location is the secreted. In Californiconus californicus (California cone), this protein is Kunitz-type serine protease inhibitor conotoxin Cal9.1a.